An 830-amino-acid polypeptide reads, in one-letter code: ATP-dependent DNA helicase chl-1 (830 aa).

Positions 1 to 403 (MDEFSFPFQP…HNLLYMKQLE (403 aa)) constitute a Helicase ATP-binding domain. ATP is bound at residue 35–42 (SPTGTGKS). 2 stretches are compositionally biased toward basic and acidic residues: residues 124-140 (GMVEVSRKRKAPARDTD) and 157-168 (NDEKSEKQRDSD). A disordered region spans residues 124–173 (GMVEVSRKRKAPARDTDQFLEPQDEAAPSEEYNNDEKSEKQRDSDFFDDV). [4Fe-4S] cluster is bound by residues Cys222, Cys240, Cys272, and Cys308. The DEAH box motif lies at 351-354 (DEAH).

The protein belongs to the DEAD box helicase family. DEAH subfamily. DDX11/CHL1 sub-subfamily. [4Fe-4S] cluster serves as cofactor.

The protein localises to the nucleus. The enzyme catalyses Couples ATP hydrolysis with the unwinding of duplex DNA at the replication fork by translocating in the 5'-3' direction. This creates two antiparallel DNA single strands (ssDNA). The leading ssDNA polymer is the template for DNA polymerase III holoenzyme which synthesizes a continuous strand.. It carries out the reaction ATP + H2O = ADP + phosphate + H(+). In terms of biological role, required for normal cell proliferation and chromosome stability. Plays a role in DNA repair during replication. The chain is ATP-dependent DNA helicase chl-1 from Caenorhabditis elegans.